The primary structure comprises 469 residues: Abscisic acid 8'-hydroxylase CYP707A2 (469 aa).

A helical transmembrane segment spans residues 3–23 (FVSMLCLFTFISLTLLLIHSI). Residue Cys414 participates in heme binding.

Belongs to the cytochrome P450 family. The cofactor is heme. As to expression, expressed at low levels in fruit.

Its subcellular location is the membrane. The catalysed reaction is 2-cis-(+)-abscisate + reduced [NADPH--hemoprotein reductase] + O2 = (+)-8'-hydroxyabscisate + oxidized [NADPH--hemoprotein reductase] + H2O + H(+). The protein operates within plant hormone degradation; abscisic acid degradation. Functionally, negative regulator of fruit ripening involved in the oxidative degradation of abscisic acid (ABA). The sequence is that of Abscisic acid 8'-hydroxylase CYP707A2 from Solanum lycopersicum (Tomato).